Consider the following 443-residue polypeptide: Ribulose bisphosphate carboxylase large chain (443 aa).

Substrate is bound by residues Asn-89 and Thr-139. Lys-141 acts as the Proton acceptor in catalysis. Lys-143 provides a ligand contact to substrate. Mg(2+) contacts are provided by Lys-167, Asp-169, and Glu-170. The residue at position 167 (Lys-167) is an N6-carboxylysine. His-260 functions as the Proton acceptor in the catalytic mechanism. Arg-261, His-293, and Ser-345 together coordinate substrate.

Belongs to the RuBisCO large chain family. Type I subfamily. As to quaternary structure, heterohexadecamer of 8 large chains and 8 small chains; disulfide-linked. The disulfide link is formed within the large subunit homodimers. Mg(2+) is required as a cofactor. The disulfide bond which can form in the large chain dimeric partners within the hexadecamer appears to be associated with oxidative stress and protein turnover.

It is found in the plastid. It localises to the chloroplast. The catalysed reaction is 2 (2R)-3-phosphoglycerate + 2 H(+) = D-ribulose 1,5-bisphosphate + CO2 + H2O. The enzyme catalyses D-ribulose 1,5-bisphosphate + O2 = 2-phosphoglycolate + (2R)-3-phosphoglycerate + 2 H(+). In terms of biological role, ruBisCO catalyzes two reactions: the carboxylation of D-ribulose 1,5-bisphosphate, the primary event in carbon dioxide fixation, as well as the oxidative fragmentation of the pentose substrate in the photorespiration process. Both reactions occur simultaneously and in competition at the same active site. The protein is Ribulose bisphosphate carboxylase large chain of Villarsia calthifolia (Marsh flower).